Consider the following 203-residue polypeptide: WUSCHEL-related homeobox 3 (203 aa).

Residues 4–68 (TPSTRWCPTP…NHKARERQRL (65 aa)) constitute a DNA-binding region (homeobox; WUS-type). Disordered stretches follow at residues 73 to 95 (CARH…TAAA), 109 to 135 (LHHH…QQQQ), and 180 to 203 (STSG…TSTN). Over residues 80–91 (PSPPSSTVPPAP) the composition is skewed to pro residues. A compositionally biased stretch (basic residues) spans 109–118 (LHHHHHHHHP). 2 stretches are compositionally biased toward low complexity: residues 119–135 (YAAA…QQQQ) and 190–203 (CSSS…TSTN).

This sequence belongs to the WUS homeobox family.

Its subcellular location is the nucleus. Its function is as follows. Transcription factor which may be involved in developmental processes. This chain is WUSCHEL-related homeobox 3 (WOX3), found in Oryza sativa subsp. indica (Rice).